The primary structure comprises 777 residues: MFPRGAEAQDWHLDMQLTGKVVLSAAALLLVTVAYRLYKSRPAPAQRWGGNGQAEAKEEAEGSGQPAVQEASPGVLLRGPRRRRSSKRAEAPQGCSCENPRGPYVLVTGATSTDRKPQRKGSGEERGGQGSDSEQVPPCCPSQETRTAVGSNPDPPHFPRLGSEPKSSPAGLIAAADGSCAGGEPSPWQDSKPREHPGLGQLEPPHCHYVAPLQGSSDMNQSWVFTRVIGVSREEAGALEAASDVDLTLHQQEGAPNSSYTFSSIARVRMEEHFIQKAEGVEPRLKGKVYDYYVESTSQAIFQGRLAPRTAALTEVPSPRPPPGSLGTGAASGGQAGDTKGAAERAASPQTGPWPSTRGFSRKESLLQIAENPELQLQPDGFRLPAPPCPDPGALPGLGRSSREPHVQPVAGTNFFHIPLTPASAPQVRLDLGNCYEVLTLAKRQNLEALKEAAYKVMSENYLQVLRSPDIYGCLSGAERELILQRRLRGRQYLVVADVCPKEDSGGLCCYDDEQDVWRPLARMPPEAVSRGCAICSLFNYLFVVSGCQGPGHQPSSRVFCYNPLTGIWSEVCPLNQARPHCRLVALDGHLYAIGGECLNSVERYDPRLDRWDFAPPLPSDTFALAHTATVRAKEIFVTGGSLRFLLFRFSAQEQRWWAGPTGGSKDRTAEMVAVNGFLYRFDLNRSLGIAVYRCSASTRLWYECATYRTPYPDAFQCAVVDNLIYCVGRRSTLCFLADSVSPRFVPKELRSFPAPQGTLLPTVLTLPTPDLPQTRV.

A helical membrane pass occupies residues V21 to Y38. The interval A43–C207 is disordered. S86 is modified (phosphoserine). The span at T113 to G127 shows a compositional bias: basic and acidic residues. N257 is a glycosylation site (N-linked (GlcNAc...) asparagine). Positions L313–G359 are disordered. Over residues L326 to A336 the composition is skewed to gly residues. 5 Kelch repeats span residues T328 to E374, Q492 to L538, Y541 to G589, H590 to R632, and E635 to G677. Position 365 is a phosphoserine (S365).

It localises to the membrane. This chain is Kelch domain-containing protein 7A (KLHDC7A), found in Homo sapiens (Human).